The sequence spans 79 residues: Small ribosomal subunit protein bS20 (79 aa).

The protein belongs to the bacterial ribosomal protein bS20 family.

Binds directly to 16S ribosomal RNA. The polypeptide is Small ribosomal subunit protein bS20 (Karelsulcia muelleri (strain GWSS) (Sulcia muelleri)).